We begin with the raw amino-acid sequence, 304 residues long: Histone H1.8 (304 aa).

Low complexity predominate over residues 1–24 (MAPGSVSSVSSSSFPSRDTSPSGS). 3 disordered regions span residues 1–38 (MAPG…PSCR), 110–248 (SKAK…NSVA), and 270–304 (TVQE…NTQA). Residues 45-123 (RNPTMLHMVL…GATGSFKLVP (79 aa)) form the H15 domain. Positions 132 to 144 (APKAGRGAAGAKE) are enriched in low complexity. 3 stretches are compositionally biased toward basic and acidic residues: residues 153 to 166 (LKKD…MEKG), 189 to 202 (KPKE…KQDK), and 225 to 237 (ANAH…EKSK). Residues 154–170 (KKDQVGKATMEKGQKRR) carry the Nuclear localization signal motif. Over residues 270-281 (TVQETKVPTPSQ) the composition is skewed to polar residues.

This sequence belongs to the histone H1/H5 family. Oocyte-specific.

The protein localises to the cytoplasm. Its subcellular location is the nucleus. It localises to the chromosome. In terms of biological role, may play a key role in the control of gene expression during oogenesis and early embryogenesis, presumably through the perturbation of chromatin structure. Essential for meiotic maturation of germinal vesicle-stage oocytes. The somatic type linker histone H1c is rapidly replaced by H1oo in a donor nucleus transplanted into an oocyte. The greater mobility of H1oo as compared to H1c may contribute to this rapid replacement and increased instability of the embryonic chromatin structure. The rapid replacement of H1c with H1oo may play an important role in nuclear remodeling. This is Histone H1.8 from Mus musculus (Mouse).